The sequence spans 510 residues: MKLAYWMYAGPAHIGTLRVASSFKNVHAIMHAPLGDDYFNVMRSMLERERDFTPVTASIVDRHVLARGSQEKVVDNINRKDKEERPDLIVLTPTCTSSILQEDLQNFVDRASTTSNSDVILADVNHYRVNELQAADRTLEQVVRYYLEKARRQGTLDQSLTKEPSANIIGIFTLGFHNQHDCRELKRLLQDLNIKVNKVIPEGGSVKDLQSLPKAWFNLVPYREIGLMTAIYLEKNFGMPYVSITPMGIVDTAECIRQIQKHVNNLIPNKKVDYEPYIDQQTRFVSQAAWFSRSIDCQNLTGKKAVVFGDATHAASITRILAREMGIRVGCTGTYCKHDTEWFKEQVQGFCDEILTTDDHTEVGDMIARIEPSAIFGTQMERHIGKRLDIPCGVISSPVHIQNFPLGYRPFLGYEGTNQIADLIYNSFTLGMEDHLLEIFGGHDTKEVITKSLSTDTDLTWNYESQLELNKIPGFVRGKIKRNTEKFARQNNITTITVEIMYAAKEALSA.

Position 36 (D36) interacts with [4Fe-4S] cluster. The Proton donor role is filled by D296. 431–432 (GM) serves as a coordination point for substrate.

The protein belongs to the ChlB/BchB/BchZ family. Protochlorophyllide reductase is composed of three subunits; ChlL, ChlN and ChlB. Forms a heterotetramer of two ChlB and two ChlN subunits. It depends on [4Fe-4S] cluster as a cofactor.

It localises to the plastid. The protein resides in the chloroplast. It carries out the reaction chlorophyllide a + oxidized 2[4Fe-4S]-[ferredoxin] + 2 ADP + 2 phosphate = protochlorophyllide a + reduced 2[4Fe-4S]-[ferredoxin] + 2 ATP + 2 H2O. The protein operates within porphyrin-containing compound metabolism; chlorophyll biosynthesis (light-independent). Component of the dark-operative protochlorophyllide reductase (DPOR) that uses Mg-ATP and reduced ferredoxin to reduce ring D of protochlorophyllide (Pchlide) to form chlorophyllide a (Chlide). This reaction is light-independent. The NB-protein (ChlN-ChlB) is the catalytic component of the complex. The protein is Light-independent protochlorophyllide reductase subunit B of Physcomitrium patens (Spreading-leaved earth moss).